Here is a 1436-residue protein sequence, read N- to C-terminus: Gag-Pol polyprotein (1436 aa).

Gly2 carries N-myristoyl glycine; by host lipidation. The interaction with Gp41 stretch occupies residues 7-31; sequence VLSGGKLDAWEKIRLRPGGKKKYRL. The interval 8-43 is interaction with host CALM1; the sequence is LSGGKLDAWEKIRLRPGGKKKYRLKHLVWASRELER. The tract at residues 12-19 is interaction with host AP3D1; it reads KLDAWEKI. Positions 14-33 are interaction with membrane phosphatidylinositol 4,5-bisphosphate and RNA; sequence DAWEKIRLRPGGKKKYRLKH. The Nuclear export signal signature appears at 16-22; that stretch reads WEKIRLR. Positions 26-32 match the Nuclear localization signal motif; it reads KKKYRLK. The interaction with membrane phosphatidylinositol 4,5-bisphosphate stretch occupies residues 73-77; sequence EELRS. A disordered region spans residues 102–129; sequence EKMEEEQNKSKNKKAQQAAADAGNNSQV. Low complexity predominate over residues 116-128; sequence AQQAAADAGNNSQ. Position 133 is a phosphotyrosine; by host (Tyr133). Positions 190 to 228 are interaction with human PPIA/CYPA and NUP153; that stretch reads NTVGGHQAAMQMLKETINEEAAEWDRLHPVHAGPIAPGQ. A dimerization/Multimerization of capsid protein p24 region spans residues 278 to 364; the sequence is YSPVSILDIR…GGPSHKARVL (87 aa). 2 CCHC-type zinc fingers span residues 392–409 and 413–430; these read IKCF…NCRA and KGCW…DCTE. The interval 490 to 494 is dimerization of protease; the sequence is PQITL. The 70-residue stretch at 509–578 folds into the Peptidase A2 domain; the sequence is KEALLDTGAD…TPVNIIGRNL (70 aa). Catalysis depends on Asp514, which acts as the For protease activity; shared with dimeric partner. Dimerization of protease stretches follow at residues 538–544 and 577–589; these read GIGGFIK and NLLT…LNFP. The Reverse transcriptase domain maps to 632–822; sequence EGKISRVGPE…PPFLWMGYEL (191 aa). Mg(2+) is bound by residues Asp698, Asp773, and Asp774. The RT 'primer grip' stretch occupies residues 815–823; the sequence is FLWMGYELH. Residues 986–1002 carry the Tryptophan repeat motif motif; it reads WETWWVEYWQATWIPEW. An RNase H type-1 domain is found at 1022 to 1145; that stretch reads IIGAETFYVD…VDKLVSQGIR (124 aa). Mg(2+)-binding residues include Asp1031, Glu1066, Asp1086, and Asp1137. The segment at 1151–1192 adopts an Integrase-type zinc-finger fold; it reads DGIDKAQEEHEKYHNNWRAMASDFNLPPVVAKEIVASCDKCQ. Zn(2+)-binding residues include His1160, His1164, Cys1188, and Cys1191. The region spanning 1202-1352 is the Integrase catalytic domain; it reads VDCSPGIWQL…SAGERIIDII (151 aa). Positions 1212, 1264, and 1300 each coordinate Mg(2+). The integrase-type DNA-binding region spans 1371–1418; the sequence is FRVYYRDSRDPIWKGPAKLLWKGEGAVVIQDNSDIKVVPRRKVKIIRD.

Homotrimer; further assembles as hexamers of trimers. Interacts with gp41 (via C-terminus). Interacts with host CALM1; this interaction induces a conformational change in the Matrix protein, triggering exposure of the myristate group. Interacts with host AP3D1; this interaction allows the polyprotein trafficking to multivesicular bodies during virus assembly. Part of the pre-integration complex (PIC) which is composed of viral genome, matrix protein, Vpr and integrase. In terms of assembly, homodimer; the homodimer further multimerizes as homohexamers or homopentamers. Interacts with human PPIA/CYPA; This interaction stabilizes the capsid. Interacts with human NUP153. Interacts with host PDZD8; this interaction stabilizes the capsid. Interacts with monkey TRIM5; this interaction destabilizes the capsid. As to quaternary structure, homodimer, whose active site consists of two apposed aspartic acid residues. Heterodimer of p66 RT and p51 RT (RT p66/p51). Heterodimerization of RT is essential for DNA polymerase activity. The overall folding of the subdomains is similar in p66 RT and p51 RT but the spatial arrangements of the subdomains are dramatically different. In terms of assembly, homotetramer; may further associate as a homohexadecamer. Part of the pre-integration complex (PIC) which is composed of viral genome, matrix protein, Vpr and integrase. Interacts with human SMARCB1/INI1 and human PSIP1/LEDGF isoform 1. Interacts with human KPNA3; this interaction might play a role in nuclear import of the pre-integration complex. Interacts with human NUP153; this interaction might play a role in nuclear import of the pre-integration complex. Mg(2+) serves as cofactor. Post-translationally, specific enzymatic cleavages by the viral protease yield mature proteins. The protease is released by autocatalytic cleavage. The polyprotein is cleaved during and after budding, this process is termed maturation. Proteolytic cleavage of p66 RT removes the RNase H domain to yield the p51 RT subunit. Nucleocapsid protein p7 might be further cleaved after virus entry. In terms of processing, tyrosine phosphorylated presumably in the virion by a host kinase. Phosphorylation is apparently not a major regulator of membrane association. Phosphorylated possibly by host MAPK1; this phosphorylation is necessary for Pin1-mediated virion uncoating. Post-translationally, methylated by host PRMT6, impairing its function by reducing RNA annealing and the initiation of reverse transcription.

Its subcellular location is the host cell membrane. The protein localises to the host endosome. The protein resides in the host multivesicular body. It localises to the virion membrane. It is found in the host nucleus. Its subcellular location is the host cytoplasm. The protein localises to the virion. It carries out the reaction Specific for a P1 residue that is hydrophobic, and P1' variable, but often Pro.. It catalyses the reaction Endohydrolysis of RNA in RNA/DNA hybrids. Three different cleavage modes: 1. sequence-specific internal cleavage of RNA. Human immunodeficiency virus type 1 and Moloney murine leukemia virus enzymes prefer to cleave the RNA strand one nucleotide away from the RNA-DNA junction. 2. RNA 5'-end directed cleavage 13-19 nucleotides from the RNA end. 3. DNA 3'-end directed cleavage 15-20 nucleotides away from the primer terminus.. The enzyme catalyses 3'-end directed exonucleolytic cleavage of viral RNA-DNA hybrid.. The catalysed reaction is DNA(n) + a 2'-deoxyribonucleoside 5'-triphosphate = DNA(n+1) + diphosphate. With respect to regulation, protease: The viral protease is inhibited by many synthetic protease inhibitors (PIs), such as amprenavir, atazanavir, indinavir, loprinavir, nelfinavir, ritonavir and saquinavir. Use of protease inhibitors in tritherapy regimens permit more ambitious therapeutic strategies. Reverse transcriptase/ribonuclease H: RT can be inhibited either by nucleoside RT inhibitors (NRTIs) or by non nucleoside RT inhibitors (NNRTIs). NRTIs act as chain terminators, whereas NNRTIs inhibit DNA polymerization by binding a small hydrophobic pocket near the RT active site and inducing an allosteric change in this region. Classical NRTIs are abacavir, adefovir (PMEA), didanosine (ddI), lamivudine (3TC), stavudine (d4T), tenofovir (PMPA), zalcitabine (ddC), and zidovudine (AZT). Classical NNRTIs are atevirdine (BHAP U-87201E), delavirdine, efavirenz (DMP-266), emivirine (I-EBU), and nevirapine (BI-RG-587). The tritherapies used as a basic effective treatment of AIDS associate two NRTIs and one NNRTI. Functionally, mediates, with Gag polyprotein, the essential events in virion assembly, including binding the plasma membrane, making the protein-protein interactions necessary to create spherical particles, recruiting the viral Env proteins, and packaging the genomic RNA via direct interactions with the RNA packaging sequence (Psi). Gag-Pol polyprotein may regulate its own translation, by the binding genomic RNA in the 5'-UTR. At low concentration, the polyprotein would promote translation, whereas at high concentration, the polyprotein would encapsidate genomic RNA and then shut off translation. Targets the polyprotein to the plasma membrane via a multipartite membrane-binding signal, that includes its myristoylated N-terminus. Matrix protein is part of the pre-integration complex. Implicated in the release from host cell mediated by Vpu. Binds to RNA. In terms of biological role, forms the conical core that encapsulates the genomic RNA-nucleocapsid complex in the virion. Most core are conical, with only 7% tubular. The core is constituted by capsid protein hexamer subunits. The core is disassembled soon after virion entry. Host restriction factors such as TRIM5-alpha or TRIMCyp bind retroviral capsids and cause premature capsid disassembly, leading to blocks in reverse transcription. Capsid restriction by TRIM5 is one of the factors which restricts HIV-1 to the human species. Host PIN1 apparently facilitates the virion uncoating. On the other hand, interactions with PDZD8 or CYPA stabilize the capsid. Its function is as follows. Encapsulates and protects viral dimeric unspliced genomic RNA (gRNA). Binds these RNAs through its zinc fingers. Acts as a nucleic acid chaperone which is involved in rearangement of nucleic acid secondary structure during gRNA retrotranscription. Also facilitates template switch leading to recombination. As part of the polyprotein, participates in gRNA dimerization, packaging, tRNA incorporation and virion assembly. Functionally, aspartyl protease that mediates proteolytic cleavages of Gag and Gag-Pol polyproteins during or shortly after the release of the virion from the plasma membrane. Cleavages take place as an ordered, step-wise cascade to yield mature proteins. This process is called maturation. Displays maximal activity during the budding process just prior to particle release from the cell. Also cleaves Nef and Vif, probably concomitantly with viral structural proteins on maturation of virus particles. Hydrolyzes host EIF4GI and PABP1 in order to shut off the capped cellular mRNA translation. The resulting inhibition of cellular protein synthesis serves to ensure maximal viral gene expression and to evade host immune response. Also mediates cleavage of host YTHDF3. Mediates cleavage of host CARD8, thereby activating the CARD8 inflammasome, leading to the clearance of latent HIV-1 in patient CD4(+) T-cells after viral reactivation; in contrast, HIV-1 can evade CARD8-sensing when its protease remains inactive in infected cells prior to viral budding. Multifunctional enzyme that converts the viral RNA genome into dsDNA in the cytoplasm, shortly after virus entry into the cell. This enzyme displays a DNA polymerase activity that can copy either DNA or RNA templates, and a ribonuclease H (RNase H) activity that cleaves the RNA strand of RNA-DNA heteroduplexes in a partially processive 3' to 5' endonucleasic mode. Conversion of viral genomic RNA into dsDNA requires many steps. A tRNA(3)-Lys binds to the primer-binding site (PBS) situated at the 5'-end of the viral RNA. RT uses the 3' end of the tRNA primer to perform a short round of RNA-dependent minus-strand DNA synthesis. The reading proceeds through the U5 region and ends after the repeated (R) region which is present at both ends of viral RNA. The portion of the RNA-DNA heteroduplex is digested by the RNase H, resulting in a ssDNA product attached to the tRNA primer. This ssDNA/tRNA hybridizes with the identical R region situated at the 3' end of viral RNA. This template exchange, known as minus-strand DNA strong stop transfer, can be either intra- or intermolecular. RT uses the 3' end of this newly synthesized short ssDNA to perform the RNA-dependent minus-strand DNA synthesis of the whole template. RNase H digests the RNA template except for two polypurine tracts (PPTs) situated at the 5'-end and near the center of the genome. It is not clear if both polymerase and RNase H activities are simultaneous. RNase H probably can proceed both in a polymerase-dependent (RNA cut into small fragments by the same RT performing DNA synthesis) and a polymerase-independent mode (cleavage of remaining RNA fragments by free RTs). Secondly, RT performs DNA-directed plus-strand DNA synthesis using the PPTs that have not been removed by RNase H as primers. PPTs and tRNA primers are then removed by RNase H. The 3' and 5' ssDNA PBS regions hybridize to form a circular dsDNA intermediate. Strand displacement synthesis by RT to the PBS and PPT ends produces a blunt ended, linear dsDNA copy of the viral genome that includes long terminal repeats (LTRs) at both ends. In terms of biological role, catalyzes viral DNA integration into the host chromosome, by performing a series of DNA cutting and joining reactions. This enzyme activity takes place after virion entry into a cell and reverse transcription of the RNA genome in dsDNA. The first step in the integration process is 3' processing. This step requires a complex comprising the viral genome, matrix protein, Vpr and integrase. This complex is called the pre-integration complex (PIC). The integrase protein removes 2 nucleotides from each 3' end of the viral DNA, leaving recessed CA OH's at the 3' ends. In the second step, the PIC enters cell nucleus. This process is mediated through integrase and Vpr proteins, and allows the virus to infect a non dividing cell. This ability to enter the nucleus is specific of lentiviruses, other retroviruses cannot and rely on cell division to access cell chromosomes. In the third step, termed strand transfer, the integrase protein joins the previously processed 3' ends to the 5' ends of strands of target cellular DNA at the site of integration. The 5'-ends are produced by integrase-catalyzed staggered cuts, 5 bp apart. A Y-shaped, gapped, recombination intermediate results, with the 5'-ends of the viral DNA strands and the 3' ends of target DNA strands remaining unjoined, flanking a gap of 5 bp. The last step is viral DNA integration into host chromosome. This involves host DNA repair synthesis in which the 5 bp gaps between the unjoined strands are filled in and then ligated. Since this process occurs at both cuts flanking the HIV genome, a 5 bp duplication of host DNA is produced at the ends of HIV-1 integration. Alternatively, Integrase may catalyze the excision of viral DNA just after strand transfer, this is termed disintegration. The sequence is that of Gag-Pol polyprotein (gag-pol) from Homo sapiens (Human).